Here is a 449-residue protein sequence, read N- to C-terminus: Alpha-L-fucosidase (449 aa).

The signal sequence occupies residues 1 to 19; it reads MGLLLLLSLLSACFQPRYA. N-linked (GlcNAc...) asparagine glycosylation is found at Asn-156, Asn-224, Asn-362, and Asn-375.

This sequence belongs to the glycosyl hydrolase 29 family. In terms of assembly, homotetramer.

The protein localises to the secreted. The enzyme catalyses an alpha-L-fucoside + H2O = L-fucose + an alcohol. Its function is as follows. Alpha-L-fucosidase is responsible for hydrolyzing the alpha-1,6-linked fucose joined to the reducing-end N-acetylglucosamine of the carbohydrate moieties of glycoproteins. The chain is Alpha-L-fucosidase from Branchiostoma floridae (Florida lancelet).